Reading from the N-terminus, the 197-residue chain is Elongation factor Ts (197 aa).

The tract at residues 81-84 (TDFV) is involved in Mg(2+) ion dislocation from EF-Tu.

Belongs to the EF-Ts family.

It is found in the cytoplasm. Its function is as follows. Associates with the EF-Tu.GDP complex and induces the exchange of GDP to GTP. It remains bound to the aminoacyl-tRNA.EF-Tu.GTP complex up to the GTP hydrolysis stage on the ribosome. In Sulfurihydrogenibium sp. (strain YO3AOP1), this protein is Elongation factor Ts.